Reading from the N-terminus, the 456-residue chain is MDTIKLKEFYNSLVSIRRRVGHRRLGIAVSGGVDSMLLSWFMKESQIMFGWPNQFIAFVVDHRIRKNSTEEALQTIWNLNRMLIPNVYLNINWGNDDVHSLTNLETIAREHRYQVLTRACITHNIRHICTAHHANDQAETIFMRLLRRKPGTWGGLCAMKPVSQIPESDSICGASNIELLRPLLPYYKNQILNTAKQHGIAWEEDPTNADINLTPRNAIRRFLNQHAALTVEATKLATAFQSLQVNIDNKVDEILKDNIVSYHQPSGTLSLCFSKNELKKHSNLTKEELLLRCLTLTTSCRQIKRSSVVSLCNSVFDGKKLTIAKCLLTSSSIKDDTKLQLQISRQPFSKAELKKKTITINPDRYVLWDHRFWIKYSCKNTQTTLILRPLLSKDLNSLKGFLSKEEFLKFCIQVPGHIRFTIPVLSEENDKLVGIPTFGFNFRSDIISNCLHKFKL.

Residue 30 to 35 (SGGVDS) coordinates ATP.

The protein belongs to the tRNA(Ile)-lysidine synthase family.

It is found in the cytoplasm. It carries out the reaction cytidine(34) in tRNA(Ile2) + L-lysine + ATP = lysidine(34) in tRNA(Ile2) + AMP + diphosphate + H(+). Its function is as follows. Ligates lysine onto the cytidine present at position 34 of the AUA codon-specific tRNA(Ile) that contains the anticodon CAU, in an ATP-dependent manner. Cytidine is converted to lysidine, thus changing the amino acid specificity of the tRNA from methionine to isoleucine. The polypeptide is Probable tRNA(Ile)-lysidine synthase (Schizosaccharomyces pombe (strain 972 / ATCC 24843) (Fission yeast)).